The primary structure comprises 248 residues: PF03932 family protein CutC (248 aa).

The protein belongs to the CutC family.

The protein localises to the cytoplasm. The polypeptide is PF03932 family protein CutC (Citrobacter koseri (strain ATCC BAA-895 / CDC 4225-83 / SGSC4696)).